Here is a 207-residue protein sequence, read N- to C-terminus: 8-oxoguanine DNA glycosylase/AP lyase (207 aa).

Catalysis depends on residues K129 and D147.

This sequence belongs to the type-2 OGG1 family.

It catalyses the reaction 2'-deoxyribonucleotide-(2'-deoxyribose 5'-phosphate)-2'-deoxyribonucleotide-DNA = a 3'-end 2'-deoxyribonucleotide-(2,3-dehydro-2,3-deoxyribose 5'-phosphate)-DNA + a 5'-end 5'-phospho-2'-deoxyribonucleoside-DNA + H(+). In terms of biological role, catalyzes the excision of an oxidatively damaged form of guanine (7,8-dihydro-8-oxoguanine = 8-oxoG) from DNA. Also cleaves the DNA backbone at apurinic/apyrimidinic sites (AP sites). Has little specificity for the base opposite oxoG. The protein is 8-oxoguanine DNA glycosylase/AP lyase of Methanocaldococcus jannaschii (strain ATCC 43067 / DSM 2661 / JAL-1 / JCM 10045 / NBRC 100440) (Methanococcus jannaschii).